Consider the following 270-residue polypeptide: 4-hydroxy-tetrahydrodipicolinate reductase (270 aa).

Residue 7-12 (GANGRM) coordinates NAD(+). Arg-34 contacts NADP(+). NAD(+)-binding positions include 97–99 (GTT) and 121–124 (SGNM). His-155 (proton donor/acceptor) is an active-site residue. Residue His-156 coordinates (S)-2,3,4,5-tetrahydrodipicolinate. Residue Lys-159 is the Proton donor of the active site. 165–166 (GT) serves as a coordination point for (S)-2,3,4,5-tetrahydrodipicolinate.

Belongs to the DapB family.

The protein localises to the cytoplasm. It catalyses the reaction (S)-2,3,4,5-tetrahydrodipicolinate + NAD(+) + H2O = (2S,4S)-4-hydroxy-2,3,4,5-tetrahydrodipicolinate + NADH + H(+). The enzyme catalyses (S)-2,3,4,5-tetrahydrodipicolinate + NADP(+) + H2O = (2S,4S)-4-hydroxy-2,3,4,5-tetrahydrodipicolinate + NADPH + H(+). It participates in amino-acid biosynthesis; L-lysine biosynthesis via DAP pathway; (S)-tetrahydrodipicolinate from L-aspartate: step 4/4. Functionally, catalyzes the conversion of 4-hydroxy-tetrahydrodipicolinate (HTPA) to tetrahydrodipicolinate. The polypeptide is 4-hydroxy-tetrahydrodipicolinate reductase (Bartonella tribocorum (strain CIP 105476 / IBS 506)).